Consider the following 145-residue polypeptide: Large ribosomal subunit protein eL32 (145 aa).

The protein belongs to the eukaryotic ribosomal protein eL32 family.

The chain is Large ribosomal subunit protein eL32 (rpl32e) from Aeropyrum pernix (strain ATCC 700893 / DSM 11879 / JCM 9820 / NBRC 100138 / K1).